The primary structure comprises 347 residues: MTNKTSLSYKDAGVDIDAGNDLVDRIKGVVKQTRRPEVMGGLGGFGALCALPQKYREPILVSGTDGVGTKLRLAMDLKRHDTIGIDLVAMCVNDLVVQGAEPLFFLDYFATGKLDVDTAASVITGIAEGCKQSGCALVGGETAEMPGMYHGEDYDVAGFCVGVVEKSEIIDGSKVAPGDALVALGASGPHSNGYSLVRKILEVSNTDPEQTQLDGKSLADHLLEPTKIYVKSILSLIEQLDIHAIAHLTGGGFWENIPRVLPQGTQAVIDEASWQWPAVFSWLQETGNVSRHEMYRTFNCGVGMVVALPAELADKAVELLTASGEKAWKIGVIAAAAEGAEQVIINP.

The protein belongs to the AIR synthase family.

The protein resides in the cytoplasm. It carries out the reaction 2-formamido-N(1)-(5-O-phospho-beta-D-ribosyl)acetamidine + ATP = 5-amino-1-(5-phospho-beta-D-ribosyl)imidazole + ADP + phosphate + H(+). Its pathway is purine metabolism; IMP biosynthesis via de novo pathway; 5-amino-1-(5-phospho-D-ribosyl)imidazole from N(2)-formyl-N(1)-(5-phospho-D-ribosyl)glycinamide: step 2/2. The sequence is that of Phosphoribosylformylglycinamidine cyclo-ligase from Yersinia enterocolitica serotype O:8 / biotype 1B (strain NCTC 13174 / 8081).